A 396-amino-acid chain; its full sequence is Activity-regulated cytoskeleton-associated protein (396 aa).

Residues 54–78 (SKQVERELKGLHRSVGKLENNLDGY) are a coiled coil. Residues 89–100 (KSIKACLCRCQE) form an interaction with SH3GL1 or SH3GL3 region. The segment at 177–207 (PPAAGELPEQESVEAQQYQSWGPGEDGQPSP) is disordered. Positions 195–214 (QSWGPGEDGQPSPGVDTQIF) are interaction with DNM2. Position 260 is a phosphoserine; by CaMK2 (Ser260). Residues Lys268 and Lys269 each participate in a glycyl lysine isopeptide (Lys-Gly) (interchain with G-Cter in ubiquitin) cross-link. Thr278 is modified (phosphothreonine). Residues 356 to 396 (QDGLEQAAEPSGTPLPTEDETEALTPALTSESVASDRTQPE) form a disordered region. Positions 382-396 (ALTSESVASDRTQPE) are enriched in polar residues.

The protein belongs to the ARC/ARG3.1 family. In terms of assembly, homooligomer; homooligomerizes into virion-like capsids. Interacts with SH3GL1/endophilin-2, SH3GL3/endophilin-3 and DNM2/DYN2. Interacts with CAMK2B (in the kinase inactive state); leading to target ARC to inactive synapses. Interacts with PSEN1. Interacts with GRIN2A and GRIN2B; inhibiting homooligomerization. In terms of processing, ubiquitinated by UBE3A, leading to its degradation by the proteasome, thereby promoting AMPA receptors (AMPARs) expression at synapses. Ubiquitinated by RNF216 at Lys-268 and Lys-269 limiting ARC protein levels induced by synaptic activity and thus regulating ARC-dependent forms of synaptic plasticity. Post-translationally, palmitoylation anchors the protein into the membrane by allowing direct insertion into the hydrophobic core of the lipid bilayer. Phosphorylation at Ser-260 by CaMK2 prevents homooligomerization into virion-like capsids by disrupting an interaction surface essential for high-order oligomerization. Phosphorylation by CaMK2 inhibits synaptic activity. As to expression, expressed in brain and testis. In primary visual cortex, detected in all cortical layers with the exception of layer 5: present at highest level in layers 2/3 and 4, the predominant sites of ocular dominance plasticity (at protein level). Also expressed in skin-migratory dendritic cells.

Its subcellular location is the extracellular vesicle membrane. The protein resides in the postsynaptic cell membrane. It localises to the synapse. It is found in the postsynaptic density. The protein localises to the early endosome membrane. Its subcellular location is the cell projection. The protein resides in the dendrite. It localises to the cytoplasm. It is found in the cytoskeleton. The protein localises to the cell cortex. Its subcellular location is the dendritic spine. The protein resides in the cytoplasmic vesicle. It localises to the secretory vesicle. It is found in the acrosome. The protein localises to the clathrin-coated vesicle membrane. Functionally, master regulator of synaptic plasticity that self-assembles into virion-like capsids that encapsulate RNAs and mediate intercellular RNA transfer in the nervous system. ARC protein is released from neurons in extracellular vesicles that mediate the transfer of ARC mRNA into new target cells, where ARC mRNA can undergo activity-dependent translation. ARC capsids are endocytosed and are able to transfer ARC mRNA into the cytoplasm of neurons. Acts as a key regulator of synaptic plasticity: required for protein synthesis-dependent forms of long-term potentiation (LTP) and depression (LTD) and for the formation of long-term memory. Regulates synaptic plasticity by promoting endocytosis of AMPA receptors (AMPARs) in response to synaptic activity: this endocytic pathway maintains levels of surface AMPARs in response to chronic changes in neuronal activity through synaptic scaling, thereby contributing to neuronal homeostasis. Acts as a postsynaptic mediator of activity-dependent synapse elimination in the developing cerebellum by mediating elimination of surplus climbing fiber synapses. Accumulates at weaker synapses, probably to prevent their undesired enhancement. This suggests that ARC-containing virion-like capsids may be required to eliminate synaptic material. Required to transduce experience into long-lasting changes in visual cortex plasticity and for long-term memory. Involved in postsynaptic trafficking and processing of amyloid-beta A4 (APP) via interaction with PSEN1. In addition to its role in synapses, also involved in the regulation of the immune system: specifically expressed in skin-migratory dendritic cells and regulates fast dendritic cell migration, thereby regulating T-cell activation. The chain is Activity-regulated cytoskeleton-associated protein from Mus musculus (Mouse).